The chain runs to 2111 residues: MFNFPHPAIDLASRMKSSPLMAGGSSSASSEDLFSPPMMEDLDTPMTEYPMGSPPRMPYRGEDIEIAFLRSEASIKKSSLFNDKFAATLDDLSARPIDSASLIGKLQSMTRSVREILDSGDQLVHEDGPQEILKQFVRVVNKHLCQDEDIHTVLAPLALEPEEKFHIIQTYYQAISMTQFVSPKWTSSLLSDALCRRANIVTVFNGQGVEGYFSELQHLYDTYGGLLAEPLYALSKQLKGLASDVRAQDMYPHGLDVIGWLENPEARPSTDYLLSAPVSQPLIGLVQLLNYAITCKILNKSPGEFARHLSGSAGHSQGIVVAAMLATVVSWPTFFDAASTALQVLFWIGCRSQQCYPSHSIPPSLVDQSERLSPMLSVKGASRESLLKYLDEHNRHLPPAQQGSLALINGRQQFVVAGNPLSLYAFANKLRAASNNSSTTNTARVPFSQRPLLITARFLPISVPFHTSLLEDAEAQILEDLRSVHVPGNSLLFPVLRTDNGADLREFDNLVPELVHMVVCGVVDWDRATRFPTATHLLDFGPGRETGIGALLASTKAGTAARVILSTTLTGPSKKTLGYMPELLSRRRPVVYNTSWEQDFAPRLVRVGDDILLDTKFSRALGLPPVMVAGMTPTTVSPDFVAEVINANYHIEIAGGGYHDAAGMRSALTRLVNLIPAGRGITVNLIYANPRAMGWQIPLLVQLRQEGLPITGLTIGAGVPSPDIASEYIRDLGLSHISFKPGSKEAIDNVLRIAESNPGFPIILQWTGGRAGGHHSYEDFHEPILDRYAQIRAYPNLILVAGSGFGGSDDTIPYITGSWSKKLGYAAMPFDGVLVGSRVMTAKEARTSPAVKQAIVDTPGVPDSQWEGTYKKATGGIITVKSEMGEPIHKLATRGVLLWAELDKEVFSLPAAQQVQELQRRKGSLMKRLNADFQKVWFGIDQQGNPVEISEMTYAEVLTRAVDLLYLKDQQAWIDPSYRSFVADFIRCVENRLSARQPRPRAVFQSALQLDRPQVFLSEFLQAYPAALEDVIVREDEDQLVKLYKQPGRKPLPFIVALDESFEYWFKKDSLWQSERLEAVTNQDVGRICILHGPVAAQYTKVANEPVKQILDNIHKPHVQAILKQQYAGDTSRVPTLDYLYSAGAVSPMLSPQDELLLPHVKHSRSYDPPTLAYDLEGPEENLPTEKQWLALIGGTKPSWRKALLTLNEIVQGKMLVENPIKGLFAPRAGLSVRIIQAGRPQKTVILMRQKSSQGQEKDEATVEIRALSTSEIMLTLRAPMTGGSAGNPPVDLVLYFTYKPTYGNNPIHEVMGTRNQRISRFYEQLWVGNAGDEGTSLQKSADDVQVLTREAILNFTKAIDNRNSAYNGKKNSKLLAPLDMAIVVAWKPLMRCLFTDAVNGDILKLLHLKNDFRVIDNASPMREGDVLSSTAAIESIRIRPDSGKVVRAVATIFKKGTPIITVASEFILQGRYEDYHNTFETKEEQVYKLPLKSKRDVVLLASKPWFRIAAADLSLDDHLDDELTFRLKSSYHFRDANTYSQIETCGTVSCAVGNKDMTIGTVMFKSNSHFLKNPVIDFLTRRGFAYDEVKQLPNAVPLAADVRIEMPTSSDQYAAASGDSNPIHLSRAFARYAGHNEGRVIHGMQTSGLVRGVVELHAAGNDPRRMKAWSASFKGKVSPGETLLVDISHTGMNNGRLIVVATARSESSSVEVFRATAEVAQKPGAYLFTGQGSQKPAMGMDLYETSQAARDVWHTAEQFFVNTYGISILEIVRNNPKEYTVHFGGSRGKAIRENYISLDFEVVNEQGEIESVRAFQEITPSSRSFTYTSSGGLLHETIFTQPALVVMELARFHDMRARGLINEDSCYAGHSLGEYAALAAMGEVFTVEGVTAAVFYRGLTMQKSIELDRSGRDYSMVAANPSRVSKNLSESDLCAIVDSIEAATGGLCEIVNFNVESTQYVCAGDLRSLDCLAGVLDSLVAHPEHLTSLETLNASVPAIVASCLAQTDKKPTPLVLQRGKATIPLKVNVPFHSSLLRPGADTFRRALRKAIPEHMVRPEKLIGRYIPNLTAMPFELSKGYFENVLAISESPFVREILERWDDNNVAVAVC.

Positions 200–565 (IVTVFNGQGV…KAGTAARVIL (366 aa)) are acetyltransferase (AT) domain. The enoyl reductase (ER) domain stretch occupies residues 618–863 (SRALGLPPVM…AIVDTPGVPD (246 aa)). A dehydratase (DH) domain region spans residues 1195-1688 (GTKPSWRKAL…SPGETLLVDI (494 aa)). One can recognise a MaoC-like domain in the interval 1606 to 1708 (EMPTSSDQYA…IVVATARSES (103 aa)). Residues 1727–2091 (YLFTGQGSQK…FENVLAISES (365 aa)) are malonyl/palmitoyl transferase (MT/PT) domain.

It belongs to the fungal fatty acid synthetase subunit beta family. [Alpha(6)beta(6)] hexamers of two multifunctional subunits (alpha and beta).

It catalyses the reaction acetyl-CoA + n malonyl-CoA + 2n NADPH + 4n H(+) = a long-chain-acyl-CoA + n CoA + n CO2 + 2n NADP(+).. The catalysed reaction is holo-[ACP] + acetyl-CoA = acetyl-[ACP] + CoA. The enzyme catalyses holo-[ACP] + malonyl-CoA = malonyl-[ACP] + CoA. It carries out the reaction a (3R)-hydroxyacyl-[ACP] = a (2E)-enoyl-[ACP] + H2O. It catalyses the reaction a 2,3-saturated acyl-[ACP] + NAD(+) = a (2E)-enoyl-[ACP] + NADH + H(+). The catalysed reaction is (9Z)-octadecenoyl-[ACP] + H2O = (9Z)-octadecenoate + holo-[ACP] + H(+). The protein operates within secondary metabolite biosynthesis. Fatty acid synthase beta subunit; part of the gene cluster that mediates the biosynthesis of aspercryptins, linear lipopeptides built from six amino acids including 2 highly unusual and nonproteogenic amino acids, 2-amino-octanoic acid (2aoa) and 2-amino-dodecanol (2adol). The core structure of aspercryptins is as follows: Ser/Ala-Thr-Ile/Val-2aoa-Asn-2adol. The first step of aspercryptin biosynthesis is the generation of the fatty acid precursors, octanoic and dodecanoic acids, by the FAS subunits atnF and atnM. The fatty acid precursors are likely transformed into the corresponding alpha-amino fatty acids in three steps. First, they are hydroxylated by the cytochrome P450 monooxygenase atnE, then oxidized to the corresponding alpha-keto acids by the NAD(P)-dependent oxidoreductase atnD, and finally converted to the alpha-amino fatty acids by the PLP-dependent aminotransferases atnH or atnJ. the alpha-amino fatty acids, 2-amino-octanoic and 2-amino-dodecanoic acids, are recognized, activated, and covalently tethered to the NRPS atnA by its fourth and sixth adenylation domains. The second module of atnA is the Thr module and contains an epimerase (E) domain responsible for the epimerization of Thr to D-allo-Thr. Additionally, despite atnA having only one epimerase domain, the first amino acid of aspercryptin A1 is D-Ser, suggesting that serine is either loaded directly as D-Ser on the first module or that the epimerase domain in the threonine module epimerizes both L-Ser and L-Thr. After condensation of the hexapeptide of aspercryptin, the C-terminal reductase (TE) domain might be involved in the reductive release and production of the aldehyde hexapeptide. Further reduction would generate aspercryptins. The variety of aspercryptins produced reflects the flexibility of the atnA NRPS, allowing incorporation of alanine instead of serine, valine for isoleucine, and a C10 fatty amino alcohol instead of the C12 version. AtnB seems to be involved in the selectivity for Ile versus Val by the third module. Moreover, type B, C and D aspercryptins have an additional N-terminal cichorine, acetyl and propionyl group respectively. This is Fatty acid synthase beta subunit aflB from Emericella nidulans (strain FGSC A4 / ATCC 38163 / CBS 112.46 / NRRL 194 / M139) (Aspergillus nidulans).